Here is a 265-residue protein sequence, read N- to C-terminus: Nitrogenase iron protein 2 (265 aa).

8–15 provides a ligand contact to ATP; it reads GKGGIGKS. Cys-91 serves as a coordination point for [4Fe-4S] cluster. The residue at position 94 (Arg-94) is an ADP-ribosylarginine; by dinitrogenase reductase ADP-ribosyltransferase. Cys-126 is a binding site for [4Fe-4S] cluster.

It belongs to the NifH/BchL/ChlL family. In terms of assembly, homodimer. [4Fe-4S] cluster is required as a cofactor. Post-translationally, the reversible ADP-ribosylation of Arg-94 inactivates the nitrogenase reductase and regulates nitrogenase activity.

It catalyses the reaction N2 + 8 reduced [2Fe-2S]-[ferredoxin] + 16 ATP + 16 H2O = H2 + 8 oxidized [2Fe-2S]-[ferredoxin] + 2 NH4(+) + 16 ADP + 16 phosphate + 6 H(+). Functionally, the key enzymatic reactions in nitrogen fixation are catalyzed by the nitrogenase complex, which has 2 components: the iron protein and the molybdenum-iron protein. The protein is Nitrogenase iron protein 2 (nifH2) of Methanothermobacter thermautotrophicus (strain ATCC 29096 / DSM 1053 / JCM 10044 / NBRC 100330 / Delta H) (Methanobacterium thermoautotrophicum).